The sequence spans 290 residues: Forkhead box protein O3B (290 aa).

Disordered stretches follow at residues 1 to 30 and 44 to 239; these read METD…TEEG and AAAA…SSRR. Composition is skewed to low complexity over residues 44–59 and 75–91; these read AAAA…RGVH and RTPA…EAPA. Phosphothreonine; by PKB/AKT1 is present on Thr-117. Acidic residues predominate over residues 142-153; sequence IPEEEDDEDDED. The fork-head DNA-binding region spans 242–290; sequence WGNLSYADLITRAIESSPDRRLTLSQIYEWMVSCVPYFKDKGNSNSSAG.

It localises to the cytoplasm. It is found in the cytosol. In terms of biological role, transcription factor. This Homo sapiens (Human) protein is Forkhead box protein O3B.